The chain runs to 102 residues: Small ribosomal subunit protein bS20 (102 aa).

The protein belongs to the bacterial ribosomal protein bS20 family.

In terms of biological role, binds directly to 16S ribosomal RNA. The protein is Small ribosomal subunit protein bS20 of Gloeobacter violaceus (strain ATCC 29082 / PCC 7421).